Consider the following 247-residue polypeptide: Sugar fermentation stimulation protein homolog (247 aa).

This sequence belongs to the SfsA family.

The chain is Sugar fermentation stimulation protein homolog from Aeromonas salmonicida (strain A449).